The following is a 759-amino-acid chain: Phosphoribosylformylglycinamidine synthase subunit PurL (759 aa).

Histidine 61 is an active-site residue. The ATP site is built by tyrosine 64 and lysine 105. A Mg(2+)-binding site is contributed by glutamate 107. Substrate is bound by residues 108-111 (SHNH) and arginine 130. The active-site Proton acceptor is the histidine 109. Aspartate 131 contributes to the Mg(2+) binding site. Glutamine 260 contacts substrate. Aspartate 288 is a Mg(2+) binding site. 332–334 (ESQ) is a substrate binding site. ATP is bound by residues aspartate 520 and glycine 557. Residue asparagine 558 participates in Mg(2+) binding. Serine 560 provides a ligand contact to substrate.

This sequence belongs to the FGAMS family. In terms of assembly, monomer. Part of the FGAM synthase complex composed of 1 PurL, 1 PurQ and 2 PurS subunits.

It is found in the cytoplasm. It catalyses the reaction N(2)-formyl-N(1)-(5-phospho-beta-D-ribosyl)glycinamide + L-glutamine + ATP + H2O = 2-formamido-N(1)-(5-O-phospho-beta-D-ribosyl)acetamidine + L-glutamate + ADP + phosphate + H(+). It functions in the pathway purine metabolism; IMP biosynthesis via de novo pathway; 5-amino-1-(5-phospho-D-ribosyl)imidazole from N(2)-formyl-N(1)-(5-phospho-D-ribosyl)glycinamide: step 1/2. In terms of biological role, part of the phosphoribosylformylglycinamidine synthase complex involved in the purines biosynthetic pathway. Catalyzes the ATP-dependent conversion of formylglycinamide ribonucleotide (FGAR) and glutamine to yield formylglycinamidine ribonucleotide (FGAM) and glutamate. The FGAM synthase complex is composed of three subunits. PurQ produces an ammonia molecule by converting glutamine to glutamate. PurL transfers the ammonia molecule to FGAR to form FGAM in an ATP-dependent manner. PurS interacts with PurQ and PurL and is thought to assist in the transfer of the ammonia molecule from PurQ to PurL. The protein is Phosphoribosylformylglycinamidine synthase subunit PurL of Thermoplasma acidophilum (strain ATCC 25905 / DSM 1728 / JCM 9062 / NBRC 15155 / AMRC-C165).